The following is a 481-amino-acid chain: Zinc metalloproteinase/disintegrin (481 aa).

Residues 1 to 20 (MIEVLLVTICLAVFPYQGSS) form the signal peptide. Positions 21–189 (IILESGNVND…KKASQLYLTP (169 aa)) are excised as a propeptide. Glu-190 bears the Pyrrolidone carboxylic acid (Glu) mark. In terms of domain architecture, Peptidase M12B spans 197-392 (RYIKLAIVVD…DNPQCILNAP (196 aa)). 296 to 299 (RNTI) is an an L-amino acid tripeptide binding site. 3 cysteine pairs are disulfide-bonded: Cys-308–Cys-387, Cys-349–Cys-371, and Cys-351–Cys-354. Position 333 (His-333) interacts with Zn(2+). Residue Glu-334 is part of the active site. Positions 337 and 343 each coordinate Zn(2+). Ser-357 is an an L-amino acid tripeptide binding site. A propeptide spanning residues 393–410 (LRTDTVSTPVSGNEFLEA) is cleaved from the precursor. The Disintegrin domain occupies 400 to 481 (TPVSGNEFLE…ADCPRNGLYG (82 aa)). 6 disulfides stabilise this stretch: Cys-414–Cys-429, Cys-416–Cys-424, Cys-423–Cys-446, Cys-437–Cys-443, Cys-442–Cys-467, and Cys-455–Cys-474. The short motif at 459-461 (RGD) is the Cell attachment site element.

This sequence belongs to the venom metalloproteinase (M12B) family. P-II subfamily. P-IIa sub-subfamily. Monomer. Requires Zn(2+) as cofactor. The N-terminus is blocked. As to expression, expressed by the venom gland.

It localises to the secreted. With respect to regulation, inhibited by EDTA and 1,10-phenanthroline. Is also inhibited by endogenous tripeptide inhibitors pyroGlu-Asn-Trp, pyroGlu-Gln-Trp, and pyroGlu-Lys-Trp. Functionally, potent fibrinogenolytic protease which cleaves mainly the Aalpha chain of fibrinogen (FGA) and slightly the Bbeta (FGB) and the gamma (FGG) chains. May possess hemorrhagic activity. Compared to other SVMP, the substrate-binding pocket is relatively shallow. Is less susceptible to tripeptide inhibitors than TM-1 (AC U3KRG1) and TM-2. Inhibits platelet aggregation induced by ADP, thrombin, platelet-activating factor and collagen. Acts by inhibiting fibrinogen interaction with platelet receptors GPIIb/GPIIIa (ITGA2B/ITGB3). The protein is Zinc metalloproteinase/disintegrin of Protobothrops mucrosquamatus (Taiwan habu).